Reading from the N-terminus, the 131-residue chain is Lysosomal enzyme trafficking factor (131 aa).

2 helical membrane passes run 8–28 and 66–86; these read MGWI…YYVF and LPFW…FLFL.

It belongs to the LYSET family.

It localises to the golgi apparatus membrane. Required for mannose-6-phosphate-dependent trafficking of lysosomal enzymes. LYSET bridges GlcNAc-1-phosphate transferase (GNPTAB), to the membrane-bound transcription factor site-1 protease (MBTPS1), thus allowing proteolytic activation of the GNPTAB. GNPTAB is involved in the regulation of M6P-dependent Golgi-to-lysosome trafficking of lysosomal enzymes. LYSET is thus an essential factor for maturation and delivery of lysosomal hydrolases. This Xenopus laevis (African clawed frog) protein is Lysosomal enzyme trafficking factor (lyset-a).